A 260-amino-acid chain; its full sequence is Translation initiation factor 2 subunit alpha (260 aa).

An S1 motif domain is found at 12–83 (GDLIVGTVHK…KKGHVDASLK (72 aa)).

This sequence belongs to the eIF-2-alpha family. Heterotrimer composed of an alpha, a beta and a gamma chain.

Its function is as follows. eIF-2 functions in the early steps of protein synthesis by forming a ternary complex with GTP and initiator tRNA. The protein is Translation initiation factor 2 subunit alpha of Methanosphaera stadtmanae (strain ATCC 43021 / DSM 3091 / JCM 11832 / MCB-3).